The sequence spans 580 residues: Serine/threonine-protein kinase srk1 (580 aa).

Residues 51 to 61 are compositionally biased toward polar residues; it reads VADSTQNPTSK. The tract at residues 51-91 is disordered; the sequence is VADSTQNPTSKPKSRHAHFHETVHENPSEYSRSKCKQPTNE. The 298-residue stretch at 124 to 421 folds into the Protein kinase domain; the sequence is YTLLQKMGDG…IHQFLAHPWI (298 aa). ATP is bound by residues 130–138 and Lys153; that span reads MGDGAFSNV. The Proton acceptor role is filled by Asp257. Residues 530-580 form a disordered region; sequence NLSGENDPSLASRQPAQSQQQSSQRSRNKFKGFQLNLSKATLYNRRHRQKV. Positions 537–554 are enriched in low complexity; it reads PSLASRQPAQSQQQSSQR.

It belongs to the protein kinase superfamily. CAMK Ser/Thr protein kinase family. CaMK subfamily. Mg(2+) serves as cofactor. In terms of processing, phosphorylated by sty1.

It is found in the cytoplasm. It localises to the nucleus. The protein localises to the nucleolus. Its subcellular location is the spore core. It catalyses the reaction L-seryl-[protein] + ATP = O-phospho-L-seryl-[protein] + ADP + H(+). The enzyme catalyses L-threonyl-[protein] + ATP = O-phospho-L-threonyl-[protein] + ADP + H(+). Delays the mitotic G2/M transition by promoting nuclear exclusion of cdc25. During osmotic stress, inhibits the G2/M transition in a sty1 stress-activated MAPK pathway-dependent manner. This chain is Serine/threonine-protein kinase srk1, found in Schizosaccharomyces pombe (strain 972 / ATCC 24843) (Fission yeast).